The chain runs to 533 residues: Putative phosphate permease jhp_1384 (533 aa).

12 helical membrane-spanning segments follow: residues 23–43, 47–67, 81–101, 129–149, 156–176, 182–202, 221–241, 248–268, 286–306, 338–358, 372–392, and 509–529; these read IALA…FGQA, GLLL…IGAN, AISM…GAII, VMLA…LIGA, SVVG…AINW, IVAS…FFLM, VVPY…IVKV, VGFE…FILF, VNEL…FAHG, VPLW…SLYG, LDKM…LLAS, and LVTV…LGFI.

It belongs to the inorganic phosphate transporter (PiT) (TC 2.A.20) family.

Its subcellular location is the cell membrane. Functionally, potential transporter for phosphate. The protein is Putative phosphate permease jhp_1384 of Helicobacter pylori (strain J99 / ATCC 700824) (Campylobacter pylori J99).